The primary structure comprises 414 residues: Serine hydroxymethyltransferase (414 aa).

Residues Leu121 and 125-127 contribute to the (6S)-5,6,7,8-tetrahydrofolate site; that span reads GHL. Lys230 carries the post-translational modification N6-(pyridoxal phosphate)lysine.

The protein belongs to the SHMT family. In terms of assembly, homodimer. The cofactor is pyridoxal 5'-phosphate.

It is found in the cytoplasm. The enzyme catalyses (6R)-5,10-methylene-5,6,7,8-tetrahydrofolate + glycine + H2O = (6S)-5,6,7,8-tetrahydrofolate + L-serine. The protein operates within one-carbon metabolism; tetrahydrofolate interconversion. Its pathway is amino-acid biosynthesis; glycine biosynthesis; glycine from L-serine: step 1/1. Functionally, catalyzes the reversible interconversion of serine and glycine with tetrahydrofolate (THF) serving as the one-carbon carrier. This reaction serves as the major source of one-carbon groups required for the biosynthesis of purines, thymidylate, methionine, and other important biomolecules. Also exhibits THF-independent aldolase activity toward beta-hydroxyamino acids, producing glycine and aldehydes, via a retro-aldol mechanism. The chain is Serine hydroxymethyltransferase from Acidithiobacillus ferrooxidans (strain ATCC 23270 / DSM 14882 / CIP 104768 / NCIMB 8455) (Ferrobacillus ferrooxidans (strain ATCC 23270)).